The sequence spans 427 residues: 3-phosphoshikimate 1-carboxyvinyltransferase (427 aa).

3-phosphoshikimate-binding residues include K22, S23, and R27. K22 is a phosphoenolpyruvate binding site. Residues G96 and R124 each contribute to the phosphoenolpyruvate site. 7 residues coordinate 3-phosphoshikimate: S169, S170, Q171, S197, D313, N336, and K340. Q171 serves as a coordination point for phosphoenolpyruvate. Residue D313 is the Proton acceptor of the active site. The phosphoenolpyruvate site is built by R344, R386, and K411.

This sequence belongs to the EPSP synthase family. Monomer.

It is found in the cytoplasm. It catalyses the reaction 3-phosphoshikimate + phosphoenolpyruvate = 5-O-(1-carboxyvinyl)-3-phosphoshikimate + phosphate. The protein operates within metabolic intermediate biosynthesis; chorismate biosynthesis; chorismate from D-erythrose 4-phosphate and phosphoenolpyruvate: step 6/7. Catalyzes the transfer of the enolpyruvyl moiety of phosphoenolpyruvate (PEP) to the 5-hydroxyl of shikimate-3-phosphate (S3P) to produce enolpyruvyl shikimate-3-phosphate and inorganic phosphate. The polypeptide is 3-phosphoshikimate 1-carboxyvinyltransferase (Shigella dysenteriae).